Consider the following 93-residue polypeptide: Aspartyl/glutamyl-tRNA(Asn/Gln) amidotransferase subunit C (93 aa).

This sequence belongs to the GatC family. Heterotrimer of A, B and C subunits.

The catalysed reaction is L-glutamyl-tRNA(Gln) + L-glutamine + ATP + H2O = L-glutaminyl-tRNA(Gln) + L-glutamate + ADP + phosphate + H(+). It catalyses the reaction L-aspartyl-tRNA(Asn) + L-glutamine + ATP + H2O = L-asparaginyl-tRNA(Asn) + L-glutamate + ADP + phosphate + 2 H(+). Its function is as follows. Allows the formation of correctly charged Asn-tRNA(Asn) or Gln-tRNA(Gln) through the transamidation of misacylated Asp-tRNA(Asn) or Glu-tRNA(Gln) in organisms which lack either or both of asparaginyl-tRNA or glutaminyl-tRNA synthetases. The reaction takes place in the presence of glutamine and ATP through an activated phospho-Asp-tRNA(Asn) or phospho-Glu-tRNA(Gln). This is Aspartyl/glutamyl-tRNA(Asn/Gln) amidotransferase subunit C from Nautilia profundicola (strain ATCC BAA-1463 / DSM 18972 / AmH).